We begin with the raw amino-acid sequence, 617 residues long: MAVDKVIVKQRNIILVGIPIDESGVEVLKWALEEVAKHGDCVVVVHVCFTYYRALKSKSSLDRYLKPYIEFCSTKKIELKGEVLKGNSVLGVLVKEAKRYNAMSVVVGVKQQSKLSLKIAKGCAKELPSTTDILAIHRGNIVFRRSNHYQLPLAQKISSRPSSELSEGFSDKDLAKTTGQEKRKISGRSLSLPSVEVVDQTPGWPLLRTSTLATPMVQHQTRKISVVNWVMSLPERFPHHPNQTCQQSFCDKQLKDILKDINRWFSYDVLKTATSDFSLENLIGKGGCNEVYKGFLEDGKGVAVKILKPSVKEAVKEFVHEVSIVSSLSHSNISPLIGVCVHYNDLISVYNLSSKGSLEETLQGKHVLRWEERLKIAIGLGEALDYLHNQCSNPVIHRDVKSSNVLLSDEFEPQLSDFGLSMWGSKSCRYTIQRDVVGTFGYLAPEYFMYGKVSDKVDVYAFGVVLLELISGRTSISSDSPRGQESLVMWAKPMIEKGNAKELLDPNIAGTFDEDQFHKMVLAATHCLTRAATYRPNIKEILKLLRGEDDVSKWVKIEEDDEDGFDDEVYPNSNTELHLSLAMVDVEDNDSVSNSSLERSNNSLFSSSSSSSQELQS.

The tract at residues 162–187 is disordered; sequence SSELSEGFSDKDLAKTTGQEKRKISG. The span at 169–184 shows a compositional bias: basic and acidic residues; the sequence is FSDKDLAKTTGQEKRK. One can recognise a Protein kinase domain in the interval 277–555; it reads FSLENLIGKG…RGEDDVSKWV (279 aa). ATP contacts are provided by residues 283–291 and K305; that span reads IGKGGCNEV. The residue at position 350 (Y350) is a Phosphotyrosine. The active-site Proton acceptor is D399. S403 bears the Phosphoserine mark. At T439 the chain carries Phosphothreonine. Y447 is modified (phosphotyrosine). The interval 590 to 617 is disordered; that stretch reads DSVSNSSLERSNNSLFSSSSSSSQELQS. The span at 591–617 shows a compositional bias: low complexity; the sequence is SVSNSSLERSNNSLFSSSSSSSQELQS.

Belongs to the protein kinase superfamily. Ser/Thr protein kinase family. As to expression, expressed ubiquitously, mostly in roots, to a lower extent in leaves, floral buds and stems, and, at low levels, in flowers and siliques.

Its subcellular location is the cytoplasm. In terms of biological role, promotes cell proliferation in the gibberellic acid (GA) signaling pathway, acting downstream of RGA, and possibly through a negative regulation of two cyclin-dependent kinase inhibitors SIM and SMR1. This is Protein kinase STUNTED from Arabidopsis thaliana (Mouse-ear cress).